The primary structure comprises 246 residues: Pyridoxine 5'-phosphate synthase (246 aa).

Asparagine 12 serves as a coordination point for 3-amino-2-oxopropyl phosphate. A 1-deoxy-D-xylulose 5-phosphate-binding site is contributed by 14-15 (DH). A 3-amino-2-oxopropyl phosphate-binding site is contributed by arginine 23. The active-site Proton acceptor is histidine 48. 1-deoxy-D-xylulose 5-phosphate-binding residues include arginine 50 and histidine 55. The active-site Proton acceptor is the glutamate 75. Threonine 105 provides a ligand contact to 1-deoxy-D-xylulose 5-phosphate. The active-site Proton donor is the histidine 196. 3-amino-2-oxopropyl phosphate contacts are provided by residues glycine 197 and 218-219 (GH).

Belongs to the PNP synthase family. Homooctamer; tetramer of dimers.

Its subcellular location is the cytoplasm. The catalysed reaction is 3-amino-2-oxopropyl phosphate + 1-deoxy-D-xylulose 5-phosphate = pyridoxine 5'-phosphate + phosphate + 2 H2O + H(+). It participates in cofactor biosynthesis; pyridoxine 5'-phosphate biosynthesis; pyridoxine 5'-phosphate from D-erythrose 4-phosphate: step 5/5. In terms of biological role, catalyzes the complicated ring closure reaction between the two acyclic compounds 1-deoxy-D-xylulose-5-phosphate (DXP) and 3-amino-2-oxopropyl phosphate (1-amino-acetone-3-phosphate or AAP) to form pyridoxine 5'-phosphate (PNP) and inorganic phosphate. This chain is Pyridoxine 5'-phosphate synthase, found in Thiobacillus denitrificans (strain ATCC 25259 / T1).